A 254-amino-acid chain; its full sequence is MAEEVWMGTWRPHRPRGPIMALYSSPGPKYLIPPTTGFVKHTPTKLRAPAYSFRGAPMLLAENCSPGPRYSVNPKILKTGKDLGPAYSILGRYHTKTLLTPGPGDYFPEKSTKYVFDSAPSHSISARTKTFRVDSTPGPAAYMLPVVMGPHTVGKVSQPSFSIKGRSKLGSFSDDLHKTPGPAAYRQTEVQVTKFKAPQYTMAARVEPPGDKTLKPGPGAHSPEKVTLNKPCAPTVTFGIKHSDYMTPLVVDVE.

2 STPGR repeats span residues 180-205 (PGPA…MAAR) and 216-241 (PGPG…FGIK). The interval 207 to 228 (EPPGDKTLKPGPGAHSPEKVTL) is disordered.

It belongs to the CIMAP family. In terms of assembly, microtubule inner protein component of sperm flagellar doublet microtubules. In terms of tissue distribution, testis-specific (at protein level). Expression restricted to the germ cell fraction, absent in somatic cell fractions such as Sertoli and Leydig cells. Expression detected in the third week postpartum (23 days) after haploid germ cells developed, expression increased with age. Expressed in the tails of elongated spermatids sticking out toward the tubular lumen, and in cytoplasmic droplets still attached to the spermatid tail membrane. Expressed in the tails of mature sperm, from the connecting piece proximal to the head, along the middle and principal pieces, down to the distal end piece.

It localises to the cytoplasm. It is found in the cytoskeleton. The protein localises to the flagellum axoneme. Functionally, outer dense fibers are filamentous structures located on the outside of the axoneme in the midpiece and principal piece of the mammalian sperm tail. May help to maintain the passive elastic structures and elastic recoil of the sperm tail. The chain is Ciliary microtubule associated protein 1A (Cimap1a) from Mus musculus (Mouse).